Here is a 397-residue protein sequence, read N- to C-terminus: ORC1-type DNA replication protein 8 (397 aa).

ATP-binding positions include 61 to 65, Y211, and R223; that span reads VGKTA.

The protein belongs to the CDC6/cdc18 family.

In terms of biological role, involved in regulation of DNA replication. In Halobacterium salinarum (strain ATCC 700922 / JCM 11081 / NRC-1) (Halobacterium halobium), this protein is ORC1-type DNA replication protein 8 (orc8).